The sequence spans 133 residues: ATP synthase epsilon chain, chloroplastic (133 aa).

This sequence belongs to the ATPase epsilon chain family. F-type ATPases have 2 components, CF(1) - the catalytic core - and CF(0) - the membrane proton channel. CF(1) has five subunits: alpha(3), beta(3), gamma(1), delta(1), epsilon(1). CF(0) has three main subunits: a, b and c.

It is found in the plastid. Its subcellular location is the chloroplast thylakoid membrane. Its function is as follows. Produces ATP from ADP in the presence of a proton gradient across the membrane. This is ATP synthase epsilon chain, chloroplastic from Nicotiana tomentosiformis (Tobacco).